Reading from the N-terminus, the 112-residue chain is uncharacterized protein (112 aa).

This is an uncharacterized protein from Escherichia coli.